We begin with the raw amino-acid sequence, 469 residues long: Chromosomal replication initiator protein DnaA (469 aa).

Residues 1-83 form a domain I, interacts with DnaA modulators region; that stretch reads MSEWDYKIFW…KKISIDFIIK (83 aa). The domain II stretch occupies residues 83–128; sequence KPNTSEDLSKAENEGGNDKKEDAAKPSSAESKKKSVKTEGGRGQHP. The disordered stretch occupies residues 89 to 131; the sequence is DLSKAENEGGNDKKEDAAKPSSAESKKKSVKTEGGRGQHPDLR. The domain III, AAA+ region stretch occupies residues 129-344; it reads DLRPEYNFED…AALTKLIAYT (216 aa). ATP contacts are provided by glycine 173, glycine 175, lysine 176, and threonine 177. The segment at 345–469 is domain IV, binds dsDNA; it reads ELTKKTMDEA…RNTIKENTNK (125 aa).

It belongs to the DnaA family. As to quaternary structure, oligomerizes as a right-handed, spiral filament on DNA at oriC.

The protein resides in the cytoplasm. Plays an essential role in the initiation and regulation of chromosomal replication. ATP-DnaA binds to the origin of replication (oriC) to initiate formation of the DNA replication initiation complex once per cell cycle. Binds the DnaA box (a 9 base pair repeat at the origin) and separates the double-stranded (ds)DNA. Forms a right-handed helical filament on oriC DNA; dsDNA binds to the exterior of the filament while single-stranded (ss)DNA is stabiized in the filament's interior. The ATP-DnaA-oriC complex binds and stabilizes one strand of the AT-rich DNA unwinding element (DUE), permitting loading of DNA polymerase. After initiation quickly degrades to an ADP-DnaA complex that is not apt for DNA replication. Binds acidic phospholipids. This is Chromosomal replication initiator protein DnaA from Treponema denticola (strain ATCC 35405 / DSM 14222 / CIP 103919 / JCM 8153 / KCTC 15104).